Consider the following 343-residue polypeptide: Squamosa promoter-binding-like protein 11 (343 aa).

The disordered stretch occupies residues 1 to 48 (MECNPVSSTTSSSLLWDWDATASAEPPPPPGKRGGRDSSSASASAKRG). Low complexity-rich tracts occupy residues 7–19 (SSTT…WDWD) and 37–48 (DSSSASASAKRG). The SBP-type zinc-finger motif lies at 64 to 141 (APRCQVEGCG…SDHNARRRKP (78 aa)). Positions 67, 72, 89, 92, 108, 111, 115, and 127 each coordinate Zn(2+). Residues 124–140 (KRSCRRRLSDHNARRRK) carry the Bipartite nuclear localization signal motif.

In terms of tissue distribution, expressed in stems, leaf sheaths, and young panicles.

The protein resides in the nucleus. Its function is as follows. Trans-acting factor that binds specifically to the consensus nucleotide sequence 5'-TNCGTACAA-3'. May be involved in panicle development. In Oryza sativa subsp. japonica (Rice), this protein is Squamosa promoter-binding-like protein 11 (SPL11).